The sequence spans 300 residues: Auxin-responsive protein IAA7 (300 aa).

Disordered stretches follow at residues 1–80 (MGEA…DGDK) and 92–125 (VSHS…LASN). Residues 43-47 (LSLGL) carry the EAR-like (transcriptional repression) motif. The span at 92-103 (VSHSQGKANKNK) shows a compositional bias: polar residues. In terms of domain architecture, PB1 spans 177-281 (APFIKINMDG…SVKRLRVLKT (105 aa)).

This sequence belongs to the Aux/IAA family. Homodimers and heterodimers. As to expression, expressed at low levels in roots and shoots.

It localises to the nucleus. In terms of biological role, aux/IAA proteins are short-lived transcriptional factors that function as repressors of early auxin response genes at low auxin concentrations. The sequence is that of Auxin-responsive protein IAA7 (IAA7) from Oryza sativa subsp. japonica (Rice).